The primary structure comprises 394 residues: MADTLAIVVAAGRSSRMGEGPKKQYRLLAGRPVLGRTLEVFEHAPAVDGVVLVVAPGEEDWCREEIVTRFGFTKVVAVVPGGEVRRDSVWAGLQALPPCALVLVHDGVRPFVTARQIAAVAEAARECGAATLAVPPKDTVKLGGPPGAPVSTLPRENLWLVQTPQAFRFDVLIKAHHLARERGLAATDDTSLAEAAGYDVRMVPGAYTNIKITTPEDLAFAEALLGGGPVLVGFGYDVHRLVDDRKLILGGVEVPHDRGLLGHSDADVLVHAVMDALLGAAGAGDIGRWFPDDDPTYRGISSMDLLVRVAAFLRERGLETSNLDAVVVAEAPRLSPFISRMRDNLASVLGVSPAAVNVKATTTEGLGFTGSGAGIAAYAVAALRRIVLPGDRVL.

Residues 1–230 (MADTLAIVVA…AEALLGGGPV (230 aa)) form a 2-C-methyl-D-erythritol 4-phosphate cytidylyltransferase region. Residues 231-394 (LVGFGYDVHR…RIVLPGDRVL (164 aa)) are 2-C-methyl-D-erythritol 2,4-cyclodiphosphate synthase. A divalent metal cation-binding residues include aspartate 237 and histidine 239. Residues 237-239 (DVH) and 263-264 (HS) each bind 4-CDP-2-C-methyl-D-erythritol 2-phosphate. Position 271 (histidine 271) interacts with a divalent metal cation. Residues 285–287 (DIG), 290–294 (FPDDD), 361–364 (TTTE), and phenylalanine 368 contribute to the 4-CDP-2-C-methyl-D-erythritol 2-phosphate site.

In the N-terminal section; belongs to the IspD/TarI cytidylyltransferase family. IspD subfamily. The protein in the C-terminal section; belongs to the IspF family. A divalent metal cation serves as cofactor.

The catalysed reaction is 2-C-methyl-D-erythritol 4-phosphate + CTP + H(+) = 4-CDP-2-C-methyl-D-erythritol + diphosphate. It carries out the reaction 4-CDP-2-C-methyl-D-erythritol 2-phosphate = 2-C-methyl-D-erythritol 2,4-cyclic diphosphate + CMP. The protein operates within isoprenoid biosynthesis; isopentenyl diphosphate biosynthesis via DXP pathway; isopentenyl diphosphate from 1-deoxy-D-xylulose 5-phosphate: step 2/6. It participates in isoprenoid biosynthesis; isopentenyl diphosphate biosynthesis via DXP pathway; isopentenyl diphosphate from 1-deoxy-D-xylulose 5-phosphate: step 4/6. Its function is as follows. Bifunctional enzyme that catalyzes the formation of 4-diphosphocytidyl-2-C-methyl-D-erythritol from CTP and 2-C-methyl-D-erythritol 4-phosphate (MEP) (IspD), and catalyzes the conversion of 4-diphosphocytidyl-2-C-methyl-D-erythritol 2-phosphate (CDP-ME2P) to 2-C-methyl-D-erythritol 2,4-cyclodiphosphate (ME-CPP) with a corresponding release of cytidine 5-monophosphate (CMP) (IspF). The protein is Bifunctional enzyme IspD/IspF of Desulforudis audaxviator (strain MP104C).